Consider the following 294-residue polypeptide: Formate dehydrogenase, nitrate-inducible, iron-sulfur subunit (294 aa).

Over 1–256 the chain is Periplasmic; that stretch reads MAMETQDIIK…DTSVSLWKGA (256 aa). 4Fe-4S ferredoxin-type domains are found at residues 30 to 58, 91 to 123, 124 to 153, and 158 to 189; these read VAKL…IRDE, LEWL…QYAN, GIVD…LNKE, and YKCT…FGTK. Residues Cys-39, Cys-42, Cys-45, Cys-49, Cys-100, Cys-103, Cys-108, Cys-112, Cys-133, Cys-136, Cys-139, Cys-143, Cys-160, Cys-163, Cys-175, and Cys-179 each coordinate [4Fe-4S] cluster. A helical membrane pass occupies residues 257-279; it reads LKPLAAAGFIATFAGLIFHYIGI. At 280-294 the chain is on the cytoplasmic side; it reads GPNKEVDDDEEDHHE.

In terms of assembly, trimer of heterotrimers, consisting of subunits alpha, beta and gamma. The cofactor is [4Fe-4S] cluster.

Its subcellular location is the cell inner membrane. Formate dehydrogenase allows E.coli to use formate as major electron donor during anaerobic respiration, when nitrate is used as electron acceptor. The beta subunit FdnH is an electron transfer unit containing 4 iron-sulfur clusters; it serves as a conduit for electrons that are transferred from the formate oxidation site in the alpha subunit (FdnG) to the menaquinone associated with the gamma subunit (FdnI) of formate dehydrogenase-N. Formate dehydrogenase-N is part of a system that generates proton motive force, together with the dissimilatory nitrate reductase (Nar). This Escherichia coli (strain K12) protein is Formate dehydrogenase, nitrate-inducible, iron-sulfur subunit (fdnH).